We begin with the raw amino-acid sequence, 314 residues long: Chlorinase cctP2 (314 aa).

A compositionally biased stretch (basic and acidic residues) spans 1-14 (MEGKTSRYQDEAHD). The interval 1 to 24 (MEGKTSRYQDEAHDSAGSFNEETE) is disordered. Short sequence motifs (HXXHC) lie at residues 150-154 (HALHC) and 177-181 (HIEHC).

The protein belongs to the ustYa family.

It functions in the pathway mycotoxin biosynthesis. Functionally, chlorinase; part of the gene cluster that mediates the biosynthesis of the mycotoxin cyclochlorotine, a hepatotoxic and carcinogenic cyclic chlorinated pentapeptide. Within the pathway, cctP2 catalyzes the formation of isocyclochlorotine via dichlorination of the Pro from the isocyclotine skeleton. The NRPS cctN initially catalyzes the condensation of L-serine (Ser), Pro, L-2-aminobutyrate (2Abu), Ser, and beta-Phe in this order to produce isocyclotine. After the dichlorination of Pro2 catalyzed by cctP2 to produce isocyclochlorotine, the cctO-mediated transacylation of isocyclochlorotine can furnish cyclochlorotine. The subsequent hydroxylation of cyclochlorotine by cctR yields hydroxycyclochlorotine as the final product. CctP1 probably acts as a phenylalanine aminomutase and provides the uncommon building block beta-Phe. Furthermore, 2Abu can be synthesized from threonine by one of the threonine dehydratases and transaminases localized outside of the cluster. The functions of the remaining proteins encoded by the cluster, cctM and cctT, have not been identified yet. The sequence is that of Chlorinase cctP2 from Talaromyces islandicus (Penicillium islandicum).